Here is a 268-residue protein sequence, read N- to C-terminus: Ribosome maturation factor RimP (268 aa).

2 disordered regions span residues 1–41 (MGSA…GRGG) and 223–268 (LVEP…EMTR). Low complexity predominate over residues 32 to 41 (PSGSARGRGG). Positions 248-257 (ESNDDGREAG) are enriched in basic and acidic residues.

This sequence belongs to the RimP family.

The protein localises to the cytoplasm. Required for maturation of 30S ribosomal subunits. The polypeptide is Ribosome maturation factor RimP (Frankia casuarinae (strain DSM 45818 / CECT 9043 / HFP020203 / CcI3)).